A 442-amino-acid polypeptide reads, in one-letter code: UDP-glycosyltransferase 78D4 (442 aa).

Residues 322-324, 339-347, and 361-364 contribute to the UDP-alpha-D-glucose site; these read APQ, HGGWNSVLE, and FGDH.

Belongs to the UDP-glycosyltransferase family.

This Arabidopsis thaliana (Mouse-ear cress) protein is UDP-glycosyltransferase 78D4 (UGT78D4).